The sequence spans 354 residues: Protein-glutamate methylesterase/protein-glutamine glutaminase 2 (354 aa).

The region spanning 3-120 (RVVVVDDSMS…PADLADYARD (118 aa)) is the Response regulatory domain. The residue at position 54 (Asp-54) is a 4-aspartylphosphate. One can recognise a CheB-type methylesterase domain in the interval 164-354 (ATRLSRVIAI…MGARLSEALQ (191 aa)). Active-site residues include Ser-176, His-202, and Asp-298.

The protein belongs to the CheB family. Phosphorylated by CheA. Phosphorylation of the N-terminal regulatory domain activates the methylesterase activity.

It localises to the cytoplasm. The enzyme catalyses [protein]-L-glutamate 5-O-methyl ester + H2O = L-glutamyl-[protein] + methanol + H(+). It carries out the reaction L-glutaminyl-[protein] + H2O = L-glutamyl-[protein] + NH4(+). In terms of biological role, involved in chemotaxis. Part of a chemotaxis signal transduction system that modulates chemotaxis in response to various stimuli. Catalyzes the demethylation of specific methylglutamate residues introduced into the chemoreceptors (methyl-accepting chemotaxis proteins or MCP) by CheR. Also mediates the irreversible deamidation of specific glutamine residues to glutamic acid. The sequence is that of Protein-glutamate methylesterase/protein-glutamine glutaminase 2 from Burkholderia thailandensis (strain ATCC 700388 / DSM 13276 / CCUG 48851 / CIP 106301 / E264).